The following is a 622-amino-acid chain: Glutamyl-tRNA(Gln) amidotransferase subunit B, mitochondrial (622 aa).

The N-terminal 54 residues, 1–54 (MSRIPTRELGRYLLQGQICQRGCVASSVSKSRAKQLGRHPLLPHDRHQPTQARH), are a transit peptide targeting the mitochondrion. The disordered stretch occupies residues 30–67 (KSRAKQLGRHPLLPHDRHQPTQARHAHTVTTTATPTQL). Positions 57 to 67 (TVTTTATPTQL) are enriched in low complexity.

The protein belongs to the GatB/GatE family. GatB subfamily. Subunit of the heterotrimeric GatCAB amidotransferase (AdT) complex, composed of A, B and C subunits.

It is found in the mitochondrion. The enzyme catalyses L-glutamyl-tRNA(Gln) + L-glutamine + ATP + H2O = L-glutaminyl-tRNA(Gln) + L-glutamate + ADP + phosphate + H(+). In terms of biological role, allows the formation of correctly charged Gln-tRNA(Gln) through the transamidation of misacylated Glu-tRNA(Gln) in the mitochondria. The reaction takes place in the presence of glutamine and ATP through an activated gamma-phospho-Glu-tRNA(Gln). The protein is Glutamyl-tRNA(Gln) amidotransferase subunit B, mitochondrial of Verticillium alfalfae (strain VaMs.102 / ATCC MYA-4576 / FGSC 10136) (Verticillium wilt of alfalfa).